The sequence spans 255 residues: 4-hydroxy-tetrahydrodipicolinate reductase (255 aa).

Residues 9–14, Asp-35, 89–91, and 115–118 contribute to the NAD(+) site; these read GFKGKM, GTT, and APNF. The Proton donor/acceptor role is filled by His-145. His-146 contributes to the (S)-2,3,4,5-tetrahydrodipicolinate binding site. The active-site Proton donor is Lys-149. (S)-2,3,4,5-tetrahydrodipicolinate is bound at residue 155–156; that stretch reads GT.

Belongs to the DapB family.

Its subcellular location is the cytoplasm. It carries out the reaction (S)-2,3,4,5-tetrahydrodipicolinate + NAD(+) + H2O = (2S,4S)-4-hydroxy-2,3,4,5-tetrahydrodipicolinate + NADH + H(+). The enzyme catalyses (S)-2,3,4,5-tetrahydrodipicolinate + NADP(+) + H2O = (2S,4S)-4-hydroxy-2,3,4,5-tetrahydrodipicolinate + NADPH + H(+). It participates in amino-acid biosynthesis; L-lysine biosynthesis via DAP pathway; (S)-tetrahydrodipicolinate from L-aspartate: step 4/4. Its function is as follows. Catalyzes the conversion of 4-hydroxy-tetrahydrodipicolinate (HTPA) to tetrahydrodipicolinate. The chain is 4-hydroxy-tetrahydrodipicolinate reductase from Streptococcus pneumoniae (strain 70585).